The sequence spans 337 residues: Holliday junction branch migration complex subunit RuvB (337 aa).

Residues 1 to 180 (MTRLISADKS…FGVISRLEFY (180 aa)) are large ATPase domain (RuvB-L). Residues leucine 19, arginine 20, glycine 61, lysine 64, threonine 65, threonine 66, 127–129 (EDF), arginine 170, tyrosine 180, and arginine 217 contribute to the ATP site. Threonine 65 lines the Mg(2+) pocket. The segment at 181–251 (THDELAFIIT…VADQALALLE (71 aa)) is small ATPAse domain (RuvB-S). Residues 254-337 (EMGFDMMDRA…APEPPQGKLF (84 aa)) form a head domain (RuvB-H) region. Arginine 309 and arginine 314 together coordinate DNA.

The protein belongs to the RuvB family. As to quaternary structure, homohexamer. Forms an RuvA(8)-RuvB(12)-Holliday junction (HJ) complex. HJ DNA is sandwiched between 2 RuvA tetramers; dsDNA enters through RuvA and exits via RuvB. An RuvB hexamer assembles on each DNA strand where it exits the tetramer. Each RuvB hexamer is contacted by two RuvA subunits (via domain III) on 2 adjacent RuvB subunits; this complex drives branch migration. In the full resolvosome a probable DNA-RuvA(4)-RuvB(12)-RuvC(2) complex forms which resolves the HJ.

It localises to the cytoplasm. It carries out the reaction ATP + H2O = ADP + phosphate + H(+). In terms of biological role, the RuvA-RuvB-RuvC complex processes Holliday junction (HJ) DNA during genetic recombination and DNA repair, while the RuvA-RuvB complex plays an important role in the rescue of blocked DNA replication forks via replication fork reversal (RFR). RuvA specifically binds to HJ cruciform DNA, conferring on it an open structure. The RuvB hexamer acts as an ATP-dependent pump, pulling dsDNA into and through the RuvAB complex. RuvB forms 2 homohexamers on either side of HJ DNA bound by 1 or 2 RuvA tetramers; 4 subunits per hexamer contact DNA at a time. Coordinated motions by a converter formed by DNA-disengaged RuvB subunits stimulates ATP hydrolysis and nucleotide exchange. Immobilization of the converter enables RuvB to convert the ATP-contained energy into a lever motion, pulling 2 nucleotides of DNA out of the RuvA tetramer per ATP hydrolyzed, thus driving DNA branch migration. The RuvB motors rotate together with the DNA substrate, which together with the progressing nucleotide cycle form the mechanistic basis for DNA recombination by continuous HJ branch migration. Branch migration allows RuvC to scan DNA until it finds its consensus sequence, where it cleaves and resolves cruciform DNA. This Geobacter sp. (strain M21) protein is Holliday junction branch migration complex subunit RuvB.